A 179-amino-acid chain; its full sequence is ATP synthase subunit delta (179 aa).

Belongs to the ATPase delta chain family. F-type ATPases have 2 components, F(1) - the catalytic core - and F(0) - the membrane proton channel. F(1) has five subunits: alpha(3), beta(3), gamma(1), delta(1), epsilon(1). F(0) has three main subunits: a(1), b(2) and c(10-14). The alpha and beta chains form an alternating ring which encloses part of the gamma chain. F(1) is attached to F(0) by a central stalk formed by the gamma and epsilon chains, while a peripheral stalk is formed by the delta and b chains.

The protein resides in the cell inner membrane. Its function is as follows. F(1)F(0) ATP synthase produces ATP from ADP in the presence of a proton or sodium gradient. F-type ATPases consist of two structural domains, F(1) containing the extramembraneous catalytic core and F(0) containing the membrane proton channel, linked together by a central stalk and a peripheral stalk. During catalysis, ATP synthesis in the catalytic domain of F(1) is coupled via a rotary mechanism of the central stalk subunits to proton translocation. Functionally, this protein is part of the stalk that links CF(0) to CF(1). It either transmits conformational changes from CF(0) to CF(1) or is implicated in proton conduction. The sequence is that of ATP synthase subunit delta from Anaeromyxobacter sp. (strain K).